Here is a 387-residue protein sequence, read N- to C-terminus: Xylose isomerase (387 aa).

Catalysis depends on residues H54 and D57. Positions 181, 217, 220, 245, 255, 257, and 287 each coordinate Mg(2+).

The protein belongs to the xylose isomerase family. In terms of assembly, homotetramer. The cofactor is Mg(2+).

It is found in the cytoplasm. It carries out the reaction alpha-D-xylose = alpha-D-xylulofuranose. The sequence is that of Xylose isomerase from Streptomyces coelicolor (strain ATCC BAA-471 / A3(2) / M145).